Here is a 143-residue protein sequence, read N- to C-terminus: Transcriptional regulator MraZ (143 aa).

SpoVT-AbrB domains lie at 5-47 and 76-119; these read SHTP…PMAE and AADD…DAQR.

This sequence belongs to the MraZ family. As to quaternary structure, forms oligomers.

Its subcellular location is the cytoplasm. It is found in the nucleoid. This chain is Transcriptional regulator MraZ, found in Frankia alni (strain DSM 45986 / CECT 9034 / ACN14a).